The following is a 218-amino-acid chain: Chymotrypsin-2 (218 aa).

The Peptidase S1 domain occupies Ile-1–Leu-218. A disulfide bond links Cys-25 and Cys-40. Catalysis depends on charge relay system residues His-39 and Asp-84. Cystine bridges form between Cys-148-Cys-161 and Cys-171-Cys-195. Residue Ser-175 is the Charge relay system of the active site.

This sequence belongs to the peptidase S1 family.

It localises to the secreted. It is found in the extracellular space. The enzyme catalyses Preferential cleavage: Tyr-|-Xaa, Trp-|-Xaa, Phe-|-Xaa, Leu-|-Xaa.. In Vespa crabro (European hornet), this protein is Chymotrypsin-2.